Here is a 958-residue protein sequence, read N- to C-terminus: Valine--tRNA ligase (958 aa).

The 'HIGH' region signature appears at 45–55 (PNVTGSLHMGH). Positions 571 to 575 (KMSKS) match the 'KMSKS' region motif. K574 contributes to the ATP binding site. Positions 892–958 (AAERTRLDKE…EALERLKQAS (67 aa)) form a coiled coil.

The protein belongs to the class-I aminoacyl-tRNA synthetase family. ValS type 1 subfamily. Monomer.

The protein localises to the cytoplasm. It catalyses the reaction tRNA(Val) + L-valine + ATP = L-valyl-tRNA(Val) + AMP + diphosphate. Functionally, catalyzes the attachment of valine to tRNA(Val). As ValRS can inadvertently accommodate and process structurally similar amino acids such as threonine, to avoid such errors, it has a 'posttransfer' editing activity that hydrolyzes mischarged Thr-tRNA(Val) in a tRNA-dependent manner. The polypeptide is Valine--tRNA ligase (Bradyrhizobium diazoefficiens (strain JCM 10833 / BCRC 13528 / IAM 13628 / NBRC 14792 / USDA 110)).